A 351-amino-acid chain; its full sequence is Flap endonuclease 1 (351 aa).

Residues 1–98 (MDLAELVEEI…QELERRKKVK (98 aa)) form an N-domain region. Positions 27, 80, 154, 156, 175, 177, and 238 each coordinate Mg(2+). An I-domain region spans residues 118-260 (ELKKYAQMSI…TAYRIIKKYG (143 aa)). The tract at residues 343-351 (RQTGLDQWF) is interaction with PCNA.

Belongs to the XPG/RAD2 endonuclease family. FEN1 subfamily. As to quaternary structure, interacts with PCNA. PCNA stimulates the nuclease activity without altering cleavage specificity. It depends on Mg(2+) as a cofactor.

Its function is as follows. Structure-specific nuclease with 5'-flap endonuclease and 5'-3' exonuclease activities involved in DNA replication and repair. During DNA replication, cleaves the 5'-overhanging flap structure that is generated by displacement synthesis when DNA polymerase encounters the 5'-end of a downstream Okazaki fragment. Binds the unpaired 3'-DNA end and kinks the DNA to facilitate 5' cleavage specificity. Cleaves one nucleotide into the double-stranded DNA from the junction in flap DNA, leaving a nick for ligation. Also involved in the base excision repair (BER) pathway. Acts as a genome stabilization factor that prevents flaps from equilibrating into structures that lead to duplications and deletions. Also possesses 5'-3' exonuclease activity on nicked or gapped double-stranded DNA. In Sulfurisphaera tokodaii (strain DSM 16993 / JCM 10545 / NBRC 100140 / 7) (Sulfolobus tokodaii), this protein is Flap endonuclease 1.